The primary structure comprises 436 residues: Proline transporter 3 (436 aa).

A run of 11 helical transmembrane segments spans residues 29 to 49, 52 to 72, 118 to 138, 151 to 171, 172 to 192, 216 to 236, 254 to 274, 296 to 316, 345 to 365, 366 to 386, and 405 to 425; these read SWFQAAFVLTTSINSAYVLGY, TVMVPLGWIGGVVGLILATAI, LFMINCGFIILAGSALKAVYV, FIAIAGLICAVFAIGIPHLSA, LGIWLAVSTILSLIYIVVAIV, LFTITGAAATLVFVFNTGMLP, LYFQFTVGVLPMFAVVFIGYW, ALANISAILQSVISLHIFASP, GGYIAVSTLLSALLPFLGDFM, SLTGAVSTFPLTFILANHMYY, and VVFFSLMSVAAAIAALRLIAL.

This sequence belongs to the amino acid/polyamine transporter 2 family. Amino acid/auxin permease (AAAP) (TC 2.A.18.3) subfamily. As to expression, expressed in epidermal cells of leaves, sepals and petals.

It localises to the cell membrane. Proline transporter that mediates proline and glycine betaine transport. When expressed in a heterologous system (yeast), imports L-proline, glycine betaine and GABA across the plasma membrane. This chain is Proline transporter 3 (PROT3), found in Arabidopsis thaliana (Mouse-ear cress).